The primary structure comprises 290 residues: Nucleotide-binding protein LAR_0375 (290 aa).

An ATP-binding site is contributed by 13-20; the sequence is GMSGAGKT. 63–66 contributes to the GTP binding site; sequence DMRS.

It belongs to the RapZ-like family.

Its function is as follows. Displays ATPase and GTPase activities. The polypeptide is Nucleotide-binding protein LAR_0375 (Limosilactobacillus reuteri subsp. reuteri (strain JCM 1112) (Lactobacillus reuteri)).